A 338-amino-acid chain; its full sequence is Ketol-acid reductoisomerase (NADP(+)) (338 aa).

The 181-residue stretch at 1–181 (MNVYYDRDCD…GGGRTGIIET (181 aa)) folds into the KARI N-terminal Rossmann domain. Residues 24-27 (YGSQ), Arg-47, Ser-50, Ser-52, and 82-85 (DEFQ) contribute to the NADP(+) site. His-107 is a catalytic residue. Gly-133 is a binding site for NADP(+). Positions 182–327 (TFKDETETDL…GNLRAMMPWI (146 aa)) constitute a KARI C-terminal knotted domain. Mg(2+) is bound by residues Asp-190, Glu-194, Glu-226, and Glu-230. Ser-251 contributes to the substrate binding site.

This sequence belongs to the ketol-acid reductoisomerase family. Requires Mg(2+) as cofactor.

It catalyses the reaction (2R)-2,3-dihydroxy-3-methylbutanoate + NADP(+) = (2S)-2-acetolactate + NADPH + H(+). The enzyme catalyses (2R,3R)-2,3-dihydroxy-3-methylpentanoate + NADP(+) = (S)-2-ethyl-2-hydroxy-3-oxobutanoate + NADPH + H(+). The protein operates within amino-acid biosynthesis; L-isoleucine biosynthesis; L-isoleucine from 2-oxobutanoate: step 2/4. It participates in amino-acid biosynthesis; L-valine biosynthesis; L-valine from pyruvate: step 2/4. Functionally, involved in the biosynthesis of branched-chain amino acids (BCAA). Catalyzes an alkyl-migration followed by a ketol-acid reduction of (S)-2-acetolactate (S2AL) to yield (R)-2,3-dihydroxy-isovalerate. In the isomerase reaction, S2AL is rearranged via a Mg-dependent methyl migration to produce 3-hydroxy-3-methyl-2-ketobutyrate (HMKB). In the reductase reaction, this 2-ketoacid undergoes a metal-dependent reduction by NADPH to yield (R)-2,3-dihydroxy-isovalerate. The protein is Ketol-acid reductoisomerase (NADP(+)) of Trichlorobacter lovleyi (strain ATCC BAA-1151 / DSM 17278 / SZ) (Geobacter lovleyi).